Consider the following 159-residue polypeptide: Ribosomal RNA large subunit methyltransferase H (159 aa).

Residues Leu-76, Gly-108, and 127 to 132 (FSKMTF) each bind S-adenosyl-L-methionine.

The protein belongs to the RNA methyltransferase RlmH family. As to quaternary structure, homodimer.

Its subcellular location is the cytoplasm. The enzyme catalyses pseudouridine(1915) in 23S rRNA + S-adenosyl-L-methionine = N(3)-methylpseudouridine(1915) in 23S rRNA + S-adenosyl-L-homocysteine + H(+). Specifically methylates the pseudouridine at position 1915 (m3Psi1915) in 23S rRNA. The polypeptide is Ribosomal RNA large subunit methyltransferase H (Bifidobacterium adolescentis (strain ATCC 15703 / DSM 20083 / NCTC 11814 / E194a)).